Here is a 137-residue protein sequence, read N- to C-terminus: Small ribosomal subunit protein uS12 (137 aa).

Residues 1–25 (MPTINQLVRQGRKSKTYKSDSPALS) are disordered. Asp-102 carries the 3-methylthioaspartic acid modification.

The protein belongs to the universal ribosomal protein uS12 family. As to quaternary structure, part of the 30S ribosomal subunit. Contacts proteins S8 and S17. May interact with IF1 in the 30S initiation complex.

Its function is as follows. With S4 and S5 plays an important role in translational accuracy. Functionally, interacts with and stabilizes bases of the 16S rRNA that are involved in tRNA selection in the A site and with the mRNA backbone. Located at the interface of the 30S and 50S subunits, it traverses the body of the 30S subunit contacting proteins on the other side and probably holding the rRNA structure together. The combined cluster of proteins S8, S12 and S17 appears to hold together the shoulder and platform of the 30S subunit. The protein is Small ribosomal subunit protein uS12 of Finegoldia magna (strain ATCC 29328 / DSM 20472 / WAL 2508) (Peptostreptococcus magnus).